Consider the following 108-residue polypeptide: PTS system fructose-like EIIB component 1 (108 aa).

One can recognise a PTS EIIB type-2 domain in the interval 1-101 (MSKKLIALCA…AAGIIKEIEE (101 aa)). C11 (phosphocysteine intermediate) is an active-site residue. Phosphocysteine; by EIIA is present on C11.

Its subcellular location is the cytoplasm. The enzyme catalyses D-fructose(out) + N(pros)-phospho-L-histidyl-[protein] = D-fructose 1-phosphate(in) + L-histidyl-[protein]. Its function is as follows. The phosphoenolpyruvate-dependent sugar phosphotransferase system (sugar PTS), a major carbohydrate active transport system, catalyzes the phosphorylation of incoming sugar substrates concomitantly with their translocation across the cell membrane. The enzyme II FryABC PTS system is involved in fructose transport. This Shigella flexneri protein is PTS system fructose-like EIIB component 1 (fryB).